Here is a 73-residue protein sequence, read N- to C-terminus: Large ribosomal subunit protein bL31 (73 aa).

The protein belongs to the bacterial ribosomal protein bL31 family. Type A subfamily. As to quaternary structure, part of the 50S ribosomal subunit.

In terms of biological role, binds the 23S rRNA. In Mesorhizobium japonicum (strain LMG 29417 / CECT 9101 / MAFF 303099) (Mesorhizobium loti (strain MAFF 303099)), this protein is Large ribosomal subunit protein bL31.